Consider the following 70-residue polypeptide: Guanine nucleotide-binding protein G(I)/G(S)/G(O) subunit gamma-8 (70 aa).

C67 is modified (cysteine methyl ester). C67 is lipidated: S-geranylgeranyl cysteine. Residues 68–70 (VLL) constitute a propeptide, removed in mature form.

This sequence belongs to the G protein gamma family. In terms of assembly, g proteins are composed of 3 units, alpha, beta and gamma.

It is found in the cell membrane. In terms of biological role, guanine nucleotide-binding proteins (G proteins) are involved as a modulator or transducer in various transmembrane signaling systems. The beta and gamma chains are required for the GTPase activity, for replacement of GDP by GTP, and for G protein-effector interaction. This chain is Guanine nucleotide-binding protein G(I)/G(S)/G(O) subunit gamma-8 (GNG8), found in Homo sapiens (Human).